A 470-amino-acid polypeptide reads, in one-letter code: uncharacterized protein (470 aa).

A disordered region spans residues 439 to 470; it reads SIKSSKSKKQLKSSKSKKPIKHTKTKNIYVET. Residues 443-463 are compositionally biased toward basic residues; that stretch reads SKSKKQLKSSKSKKPIKHTKT.

This is an uncharacterized protein from Acanthamoeba polyphaga mimivirus (APMV).